Reading from the N-terminus, the 225-residue chain is Uridylate kinase (225 aa).

Position 9 to 10 (9 to 10) interacts with ATP; it reads GS. Residue G46 coordinates UMP. Residues G47 and R51 each contribute to the ATP site. UMP is bound by residues D67 and 115 to 121; that span reads THPAHTT. 4 residues coordinate ATP: T141, N142, Y147, and D150.

The protein belongs to the UMP kinase family. Homohexamer.

It is found in the cytoplasm. The enzyme catalyses UMP + ATP = UDP + ADP. Its pathway is pyrimidine metabolism; CTP biosynthesis via de novo pathway; UDP from UMP (UMPK route): step 1/1. Its activity is regulated as follows. Inhibited by UTP. Its function is as follows. Catalyzes the reversible phosphorylation of UMP to UDP. This chain is Uridylate kinase, found in Methanococcus maripaludis (strain DSM 14266 / JCM 13030 / NBRC 101832 / S2 / LL).